The sequence spans 251 residues: uncharacterized protein (251 aa).

This sequence to M.jannaschii MJ0638 and MJ1123 and M.tuberculosis Rv2003c.

This is an uncharacterized protein from Methanocaldococcus jannaschii (strain ATCC 43067 / DSM 2661 / JAL-1 / JCM 10045 / NBRC 100440) (Methanococcus jannaschii).